The primary structure comprises 322 residues: MKNGSGNTNTKLILLHPYIQKQTSTTRLWLLAFVSFFTIVFLLTLLYTRDTIPSKNTSVAAAVAAVVTGGSTPSASSPISNSNLPTSAINALLHYASRSNDSFHMSYGEMKSISDVLRRCAPPCNLLVFGLTHETLLWKSLNHNGRTVFIEENRYYAAYFEEIHPEIDVFDVQYTTKAHEAGELVTAAKEAAGNECRPVQNLLFSDCKLGLNDLPNHVYDVDWDVIFVDGPRGDAHEGPGRMSSIFTAAVLARSKKGGTPKTHVFVHDYYRDVERLCGDEFLCRENLVESNDLLAHYVLDKMDKNSTKFCNGRKKRSVSSLS.

The chain crosses the membrane as a helical span at residues 28-48; that stretch reads LWLLAFVSFFTIVFLLTLLYT.

In terms of tissue distribution, expressed in rosette leaves, stems and siliques. Expressed in the xylem.

It localises to the golgi apparatus membrane. Functionally, required for xylan biosynthesis, but not directly involved in catalyzing the addition of sugars to the growing polymer. This is Protein IRREGULAR XYLEM 15 (IRX15) from Arabidopsis thaliana (Mouse-ear cress).